Here is a 345-residue protein sequence, read N- to C-terminus: Protein RecA (345 aa).

G80–T87 is an ATP binding site.

Belongs to the RecA family.

The protein resides in the cytoplasm. Can catalyze the hydrolysis of ATP in the presence of single-stranded DNA, the ATP-dependent uptake of single-stranded DNA by duplex DNA, and the ATP-dependent hybridization of homologous single-stranded DNAs. It interacts with LexA causing its activation and leading to its autocatalytic cleavage. In Mycoplasma mycoides subsp. mycoides SC (strain CCUG 32753 / NCTC 10114 / PG1), this protein is Protein RecA.